Here is a 158-residue protein sequence, read N- to C-terminus: Cytochrome c-type biogenesis protein CcmE (158 aa).

At 1-23 (MNSQSFKNFPSLKFISKKRRKER) the chain is on the cytoplasmic side. Residues 24-44 (LLMVLLCLFIMAITTGLIVYA) form a helical; Signal-anchor for type II membrane protein membrane-spanning segment. Topologically, residues 45–158 (MRNTANFFRT…DRLKKHHDIK (114 aa)) are periplasmic. 2 residues coordinate heme: His138 and Tyr142.

The protein belongs to the CcmE/CycJ family.

Its subcellular location is the cell inner membrane. Its function is as follows. Heme chaperone required for the biogenesis of c-type cytochromes. Transiently binds heme delivered by CcmC and transfers the heme to apo-cytochromes in a process facilitated by CcmF and CcmH. This is Cytochrome c-type biogenesis protein CcmE from Bartonella bacilliformis (strain ATCC 35685 / KC583 / Herrer 020/F12,63).